The primary structure comprises 382 residues: ATP phosphoribosyltransferase regulatory subunit (382 aa).

The protein belongs to the class-II aminoacyl-tRNA synthetase family. HisZ subfamily. As to quaternary structure, heteromultimer composed of HisG and HisZ subunits.

It is found in the cytoplasm. The protein operates within amino-acid biosynthesis; L-histidine biosynthesis; L-histidine from 5-phospho-alpha-D-ribose 1-diphosphate: step 1/9. Required for the first step of histidine biosynthesis. May allow the feedback regulation of ATP phosphoribosyltransferase activity by histidine. The protein is ATP phosphoribosyltransferase regulatory subunit of Burkholderia ambifaria (strain ATCC BAA-244 / DSM 16087 / CCUG 44356 / LMG 19182 / AMMD) (Burkholderia cepacia (strain AMMD)).